Reading from the N-terminus, the 603-residue chain is Sesquiterpene synthase Cad (603 aa).

The segment covering 1 to 13 has biased composition (polar residues); the sequence is MAEVGLSQNSYAS. Residues 1 to 23 form a disordered region; the sequence is MAEVGLSQNSYASANHDKKSEQQ. Mg(2+) is bound by residues aspartate 357, aspartate 361, aspartate 498, and glutamate 506. The DDXXD motif motif lies at 357–361; that stretch reads DDIFD.

This sequence belongs to the terpene synthase family. Tpsa subfamily. Mg(2+) is required as a cofactor. Mn(2+) serves as cofactor. Mostly expressed in leaves and, to a lower extent, in stems and xylem.

The enzyme catalyses (2E,6E)-farnesyl diphosphate = beta-cadinene + diphosphate. The protein operates within secondary metabolite biosynthesis; terpenoid biosynthesis. In terms of biological role, sesquiterpene synthase involved in the biosynthesis of volatile compounds. Mediates the conversion of (2E,6E)-farnesyl diphosphate (FPP) into beta-cadinene. Not active with geranyl diphosphate (GPP) and geranylgeranyl diphosphate (GGPP) as substrates. In Chamaecyparis formosensis (Formosan cypress), this protein is Sesquiterpene synthase Cad.